We begin with the raw amino-acid sequence, 160 residues long: MTKKKSHKPGSATIALNKRARHEYFIEDEIEAGLSLQGWEVKSLRAGKANISDSYVIMRDGEAYLFGATITPLNVASTHVVCDPTRTRKLLLKQRELANLYGQINRDGYTVVALSLYWKNAWCKIKIGVAKGKKDHDKRDTIKDREWKLDKARIMKNANR.

It belongs to the SmpB family.

It is found in the cytoplasm. Functionally, required for rescue of stalled ribosomes mediated by trans-translation. Binds to transfer-messenger RNA (tmRNA), required for stable association of tmRNA with ribosomes. tmRNA and SmpB together mimic tRNA shape, replacing the anticodon stem-loop with SmpB. tmRNA is encoded by the ssrA gene; the 2 termini fold to resemble tRNA(Ala) and it encodes a 'tag peptide', a short internal open reading frame. During trans-translation Ala-aminoacylated tmRNA acts like a tRNA, entering the A-site of stalled ribosomes, displacing the stalled mRNA. The ribosome then switches to translate the ORF on the tmRNA; the nascent peptide is terminated with the 'tag peptide' encoded by the tmRNA and targeted for degradation. The ribosome is freed to recommence translation, which seems to be the essential function of trans-translation. The polypeptide is SsrA-binding protein (Proteus mirabilis (strain HI4320)).